Here is a 332-residue protein sequence, read N- to C-terminus: Glycine betaine-binding periplasmic protein OusX (332 aa).

Positions 1–21 (MRNISMATLALTTVLSTGLFA) are cleaved as a signal peptide.

In terms of assembly, the complex is composed of two ATP-binding proteins (OusV), two transmembrane proteins (OusW) and a solute-binding protein (OusX).

Its subcellular location is the periplasm. Part of the OusB ABC transporter complex involved in glycine betaine and choline uptake. Binds glycine betaine. The protein is Glycine betaine-binding periplasmic protein OusX of Dickeya dadantii (strain 3937) (Erwinia chrysanthemi (strain 3937)).